We begin with the raw amino-acid sequence, 437 residues long: GTPase Obg (437 aa).

One can recognise an Obg domain in the interval 2-160 (SMFLDTAKIK…RNLELELKVL (159 aa)). The 178-residue stretch at 161–338 (ADVGLVGFPS…LLEATAELLE (178 aa)) folds into the OBG-type G domain. GTP contacts are provided by residues 167-174 (GFPSVGKS), 192-196 (FTTIV), 214-217 (DLPG), 284-287 (NKMD), and 319-321 (SGI). Positions 174 and 194 each coordinate Mg(2+). One can recognise an OCT domain in the interval 359-437 (GFNPDEPEFA…IGKFEFEFVD (79 aa)).

It belongs to the TRAFAC class OBG-HflX-like GTPase superfamily. OBG GTPase family. In terms of assembly, monomer. It depends on Mg(2+) as a cofactor.

The protein resides in the cytoplasm. Its function is as follows. An essential GTPase which binds GTP, GDP and possibly (p)ppGpp with moderate affinity, with high nucleotide exchange rates and a fairly low GTP hydrolysis rate. Plays a role in control of the cell cycle, stress response, ribosome biogenesis and in those bacteria that undergo differentiation, in morphogenesis control. The protein is GTPase Obg of Streptococcus suis (strain 05ZYH33).